The chain runs to 317 residues: tRNA dimethylallyltransferase (317 aa).

14-21 (GPTASGKT) contributes to the ATP binding site. 16 to 21 (TASGKT) is a substrate binding site. Interaction with substrate tRNA regions lie at residues 39 to 42 (DSAL) and 163 to 167 (QRIQR).

Belongs to the IPP transferase family. As to quaternary structure, monomer. The cofactor is Mg(2+).

It catalyses the reaction adenosine(37) in tRNA + dimethylallyl diphosphate = N(6)-dimethylallyladenosine(37) in tRNA + diphosphate. Functionally, catalyzes the transfer of a dimethylallyl group onto the adenine at position 37 in tRNAs that read codons beginning with uridine, leading to the formation of N6-(dimethylallyl)adenosine (i(6)A). This chain is tRNA dimethylallyltransferase, found in Stenotrophomonas maltophilia (strain R551-3).